Here is a 158-residue protein sequence, read N- to C-terminus: Small ribosomal subunit protein eS10 (158 aa).

Residues 99 to 158 are disordered; that stretch reads ETVRRGAVGRPDAPARSAEDRSAYRRAPTTPAAHDKKADVGPGSADLEFRGGFGRGRPAP. Positions 149-158 are enriched in gly residues; the sequence is GGFGRGRPAP.

The protein belongs to the eukaryotic ribosomal protein eS10 family.

It is found in the cytoplasm. In Spodoptera frugiperda (Fall armyworm), this protein is Small ribosomal subunit protein eS10 (RpS10).